Reading from the N-terminus, the 474-residue chain is MKIKTRFSPSPTGLLHMGGVRTALYSWLFARKNNGSFILRIEDTDKNRVKNNSVQDILYGLRYLQLNWDEGPFFQSNRINIYKNIILFMLKKGIAYKCYCSKNRLDKLRKNQILNKKKPKYDNKCRNKNFFLKKSNIPYVIRFKNPTKGLVEFRDMIRGKISISNKELDDLVIQRSNGMPTYNFCVVVDDWQMNITHIIRGEDHIHNTPRQINLLSSLNAYIPQYAHTSMILDKKRKKLSKRCSSYSIINYINNGFIPEAILNYALQLGWSYKNQEIFSINEMKNIFNIKYINKSPSIIDKKKFLWFNHYYLNNISFNLKYKYFFSYCKKNNIFFDKDVNISGVIKDFLGRHSTFKDFIQTYDYFYKEINISNIKNIYLYNKLINITILKFLYKKFNLLNNWDLKNILLIIKESILYFKISFKEIAILIRIVITGKKQTPSISSIIFYIGKKKFLLRIKNFLKYLQLNNSNFSK.

A 'HIGH' region motif is present at residues 9 to 19; it reads PSPTGLLHMGG. Positions 238–242 match the 'KMSKS' region motif; it reads KLSKR. Residue K241 coordinates ATP.

The protein belongs to the class-I aminoacyl-tRNA synthetase family. Glutamate--tRNA ligase type 1 subfamily. As to quaternary structure, monomer.

The protein resides in the cytoplasm. It carries out the reaction tRNA(Glu) + L-glutamate + ATP = L-glutamyl-tRNA(Glu) + AMP + diphosphate. In terms of biological role, catalyzes the attachment of glutamate to tRNA(Glu) in a two-step reaction: glutamate is first activated by ATP to form Glu-AMP and then transferred to the acceptor end of tRNA(Glu). This Buchnera aphidicola subsp. Cinara cedri (strain Cc) protein is Glutamate--tRNA ligase.